A 37-amino-acid chain; its full sequence is Large ribosomal subunit protein bL36 (37 aa).

Belongs to the bacterial ribosomal protein bL36 family.

The chain is Large ribosomal subunit protein bL36 from Campylobacter jejuni subsp. jejuni serotype O:6 (strain 81116 / NCTC 11828).